The following is a 155-amino-acid chain: Ribonuclease H (155 aa).

Residues 1–142 (MLKQVEIFTD…CDVLARDAAS (142 aa)) enclose the RNase H type-1 domain. Mg(2+) contacts are provided by Asp-10, Glu-48, Asp-70, and Asp-134.

Belongs to the RNase H family. In terms of assembly, monomer. Mg(2+) is required as a cofactor.

The protein localises to the cytoplasm. It carries out the reaction Endonucleolytic cleavage to 5'-phosphomonoester.. Functionally, endonuclease that specifically degrades the RNA of RNA-DNA hybrids. The protein is Ribonuclease H of Serratia proteamaculans (strain 568).